Reading from the N-terminus, the 110-residue chain is MSAMLNENVPVEFQEAHGYAAREKVVLRMRGRSWTVRLKHTKGRRPRRERAVLRYGWHRFCADNGLAVGDTCFFRALRSAGSGAGDVDDGDGDHVLSVTVHKADGGDPLE.

The segment at residues 1–104 is a DNA-binding region (TF-B3); the sequence is MSAMLNENVP…VLSVTVHKAD (104 aa).

It is found in the nucleus. In Oryza sativa subsp. japonica (Rice), this protein is B3 domain-containing protein LOC_Os02g10420.